A 330-amino-acid polypeptide reads, in one-letter code: Peptide transport system ATP-binding protein SapD (330 aa).

One can recognise an ABC transporter domain in the interval 6 to 259 (IRNLTIEFKT…PHHPYTQALI (254 aa)). 40–47 (GESGSGKS) contacts ATP.

This sequence belongs to the ABC transporter superfamily.

It is found in the cell inner membrane. Its function is as follows. Involved in a peptide intake transport system that plays a role in the resistance to antimicrobial peptides. The chain is Peptide transport system ATP-binding protein SapD (sapD) from Escherichia coli O157:H7.